The primary structure comprises 276 residues: Halorhodopsin (276 aa).

The propeptide occupies Met1 to Gln21. Over Glu22 to Ser25 the chain is Extracellular. A helical transmembrane segment spans residues Asn26–Gly51. Residues Arg52–Pro57 lie on the Cytoplasmic side of the membrane. The helical transmembrane segment at Arg58–Ala81 threads the bilayer. Residues Ser82–Pro105 are Extracellular-facing. Residues Trp106–Ala127 form a helical membrane-spanning segment. The Cytoplasmic segment spans residues Asp128–Asp130. The chain crosses the membrane as a helical span at residues Ile131–Ile154. Over Thr155–Ser157 the chain is Extracellular. A helical transmembrane segment spans residues His158–Leu180. Residues Val181–Thr192 are Cytoplasmic-facing. Residues Ser193–Leu216 traverse the membrane as a helical segment. Residues Gly217–Ser225 lie on the Extracellular side of the membrane. Residues Val226–Ala254 traverse the membrane as a helical segment. Lys241 is modified (N6-(retinylidene)lysine). Residues Asn255–Asp276 are Cytoplasmic-facing.

It belongs to the archaeal/bacterial/fungal opsin family.

The protein resides in the cell membrane. Its function is as follows. Light-driven chloride pump. This is Halorhodopsin (hop) from Halobacterium halobium (strain port).